The sequence spans 102 residues: Crustacean hyperglycemic hormones 3 (102 aa).

The signal sequence occupies residues 1-22 (MIALRLIAVTLVVAMAASTTWA). 3 disulfides stabilise this stretch: C35–C71, C51–C67, and C54–C80. V100 is modified (valine amide).

This sequence belongs to the arthropod CHH/MIH/GIH/VIH hormone family.

The protein resides in the secreted. Hormone found in the sinus gland of isopods and decapods which controls the blood sugar level. Has a secretagogue action over the amylase released from the midgut gland. May act as a stress hormone and may be involved in the control of molting and reproduction. The polypeptide is Crustacean hyperglycemic hormones 3 (CHH3) (Penaeus monodon (Giant tiger prawn)).